Consider the following 278-residue polypeptide: 4-hydroxy-3-methylbut-2-enyl diphosphate reductase (278 aa).

Cys-12 contacts [4Fe-4S] cluster. The (2E)-4-hydroxy-3-methylbut-2-enyl diphosphate site is built by His-40 and His-75. Residues His-40 and His-75 each coordinate dimethylallyl diphosphate. Residues His-40 and His-75 each coordinate isopentenyl diphosphate. Cys-97 provides a ligand contact to [4Fe-4S] cluster. Residue His-125 coordinates (2E)-4-hydroxy-3-methylbut-2-enyl diphosphate. His-125 lines the dimethylallyl diphosphate pocket. His-125 provides a ligand contact to isopentenyl diphosphate. Glu-127 (proton donor) is an active-site residue. (2E)-4-hydroxy-3-methylbut-2-enyl diphosphate is bound at residue Thr-157. Cys-187 is a binding site for [4Fe-4S] cluster. The (2E)-4-hydroxy-3-methylbut-2-enyl diphosphate site is built by Ser-215, Ser-216, Asn-217, and Ser-258. The dimethylallyl diphosphate site is built by Ser-215, Ser-216, Asn-217, and Ser-258. Isopentenyl diphosphate contacts are provided by Ser-215, Ser-216, Asn-217, and Ser-258.

Belongs to the IspH family. Requires [4Fe-4S] cluster as cofactor.

It catalyses the reaction isopentenyl diphosphate + 2 oxidized [2Fe-2S]-[ferredoxin] + H2O = (2E)-4-hydroxy-3-methylbut-2-enyl diphosphate + 2 reduced [2Fe-2S]-[ferredoxin] + 2 H(+). It carries out the reaction dimethylallyl diphosphate + 2 oxidized [2Fe-2S]-[ferredoxin] + H2O = (2E)-4-hydroxy-3-methylbut-2-enyl diphosphate + 2 reduced [2Fe-2S]-[ferredoxin] + 2 H(+). The protein operates within isoprenoid biosynthesis; dimethylallyl diphosphate biosynthesis; dimethylallyl diphosphate from (2E)-4-hydroxy-3-methylbutenyl diphosphate: step 1/1. Its pathway is isoprenoid biosynthesis; isopentenyl diphosphate biosynthesis via DXP pathway; isopentenyl diphosphate from 1-deoxy-D-xylulose 5-phosphate: step 6/6. In terms of biological role, catalyzes the conversion of 1-hydroxy-2-methyl-2-(E)-butenyl 4-diphosphate (HMBPP) into a mixture of isopentenyl diphosphate (IPP) and dimethylallyl diphosphate (DMAPP). Acts in the terminal step of the DOXP/MEP pathway for isoprenoid precursor biosynthesis. This chain is 4-hydroxy-3-methylbut-2-enyl diphosphate reductase, found in Pseudothermotoga lettingae (strain ATCC BAA-301 / DSM 14385 / NBRC 107922 / TMO) (Thermotoga lettingae).